The chain runs to 147 residues: Protein MioC (147 aa).

The Flavodoxin-like domain occupies 4–143; that stretch reads ITLISGSTLG…PAEEWLGSWV (140 aa).

Belongs to the flavodoxin family. MioC subfamily. Homodimer. Requires FMN as cofactor.

Probable electron transporter required for biotin synthase activity. This chain is Protein MioC (mioC), found in Escherichia coli (strain K12).